The primary structure comprises 872 residues: Bifunctional uridylyltransferase/uridylyl-removing enzyme (872 aa).

Residues 1-332 (MALPNKVKKL…PKHHQPIIQE (332 aa)) form a uridylyltransferase region. Residues 333–691 (LDRNFERIGN…VSNKAMHGGT (359 aa)) form a uridylyl-removing region. In terms of domain architecture, HD spans 450-572 (VDEHTHRLIN…VKTERQLDYL (123 aa)). 2 ACT domains span residues 692–773 (QVFV…FKKN) and 799–872 (LIEI…AETE).

This sequence belongs to the GlnD family. Requires Mg(2+) as cofactor.

It catalyses the reaction [protein-PII]-L-tyrosine + UTP = [protein-PII]-uridylyl-L-tyrosine + diphosphate. It carries out the reaction [protein-PII]-uridylyl-L-tyrosine + H2O = [protein-PII]-L-tyrosine + UMP + H(+). With respect to regulation, uridylyltransferase (UTase) activity is inhibited by glutamine, while glutamine activates uridylyl-removing (UR) activity. In terms of biological role, modifies, by uridylylation and deuridylylation, the PII regulatory proteins (GlnB and homologs), in response to the nitrogen status of the cell that GlnD senses through the glutamine level. Under low glutamine levels, catalyzes the conversion of the PII proteins and UTP to PII-UMP and PPi, while under higher glutamine levels, GlnD hydrolyzes PII-UMP to PII and UMP (deuridylylation). Thus, controls uridylylation state and activity of the PII proteins, and plays an important role in the regulation of nitrogen assimilation and metabolism. The polypeptide is Bifunctional uridylyltransferase/uridylyl-removing enzyme (Pseudoalteromonas translucida (strain TAC 125)).